A 133-amino-acid chain; its full sequence is Peptide methionine sulfoxide reductase MsrB (133 aa).

The MsrB domain occupies 8–130 (LEEWRAMLDP…NSVCLDFKPR (123 aa)). Residues Cys47, Cys50, Cys96, and Cys99 each coordinate Zn(2+). The active-site Nucleophile is Cys119.

Belongs to the MsrB Met sulfoxide reductase family. Requires Zn(2+) as cofactor.

It carries out the reaction L-methionyl-[protein] + [thioredoxin]-disulfide + H2O = L-methionyl-(R)-S-oxide-[protein] + [thioredoxin]-dithiol. The sequence is that of Peptide methionine sulfoxide reductase MsrB from Pseudomonas putida (strain W619).